The chain runs to 809 residues: MNDWASLGIGSIGEAVFSKLLKVVIDEAKKFKAFKPLSKDLVSTMEILFPLTQKIDSMQKELDFGVKELKELRDTIERADVAVRKFPRVKWYEKSKYTRKIERINKDMLKFCQIDLQLLQHRNQLTLLGLTGNLVNSVDGLSKRMDLLSVPAPVFRDLCSVPKLDKVIVGLDWPLGELKKRLLDDSVVTLVVSAPPGCGKTTLVSRLCDDPDIKGKFKHIFFNVVSNTPNFRVIVQNLLQHNGYNALTFENDSQAEVGLRKLLEELKENGPILLVLDDVWRGADSFLQKFQIKLPNYKILVTSRFDFPSFDSNYRLKPLEDDDARALLIHWASRPCNTSPDEYEDLLQKILKRCNGFPIVIEVVGVSLKGRSLNTWKGQVESWSEGEKILGKPYPTVLECLQPSFDALDPNLKECFLDMGSFLEDQKIRASVIIDMWVELYGKGSSILYMYLEDLASQNLLKLVPLGTNEHEDGFYNDFLVTQHDILRELAICQSEFKENLERKRLNLEILENTFPDWCLNTINASLLSISTDDLFSSKWLEMDCPNVEALVLNLSSSDYALPSFISGMKKLKVLTITNHGFYPARLSNFSCLSSLPNLKRIRLEKVSITLLDIPQLQLSSLKKLSLVMCSFGEVFYDTEDIVVSNALSKLQEIDIDYCYDLDELPYWISEIVSLKTLSITNCNKLSQLPEAIGNLSRLEVLRLCSSMNLSELPEATEGLSNLRFLDISHCLGLRKLPQEIGKLQNLKKISMRKCSGCELPESVTNLENLEVKCDEETGLLWERLKPKMRNLRVQEEEIEHNLNLLQMF.

An RPW8 domain is found at Met-1 to Val-150. Residues Pro-50 to Phe-86 adopt a coiled-coil conformation. NB-ARC domains follow at residues Pro-153 to Trp-280 and Ser-339 to Val-438. An ATP-binding site is contributed by Ala-194–Thr-201. The stretch at Gln-494–Phe-515 forms a coiled coil. 4 LRR repeats span residues Lys-650–Ile-672, Ser-674–Leu-696, Arg-698–Leu-720, and Asn-722–Leu-744.

Belongs to the disease resistance NB-LRR family.

Functionally, probable disease resistance protein. The polypeptide is Probable disease resistance protein At5g66900 (Arabidopsis thaliana (Mouse-ear cress)).